A 155-amino-acid polypeptide reads, in one-letter code: Interleukin-2 (155 aa).

A signal peptide spans 1–20 (MYSMQLASCVALTLVLLVNS). The O-linked (GalNAc...) threonine glycan is linked to threonine 23. The cysteines at positions 78 and 126 are disulfide-linked.

This sequence belongs to the IL-2 family.

It is found in the secreted. Functionally, cytokine produced by activated CD4-positive helper T-cells and to a lesser extend activated CD8-positive T-cells and natural killer (NK) cells that plays pivotal roles in the immune response and tolerance. Binds to a receptor complex composed of either the high-affinity trimeric IL-2R (IL2RA/CD25, IL2RB/CD122 and IL2RG/CD132) or the low-affinity dimeric IL-2R (IL2RB and IL2RG). Interaction with the receptor leads to oligomerization and conformation changes in the IL-2R subunits resulting in downstream signaling starting with phosphorylation of JAK1 and JAK3. In turn, JAK1 and JAK3 phosphorylate the receptor to form a docking site leading to the phosphorylation of several substrates including STAT5. This process leads to activation of several pathways including STAT, phosphoinositide-3-kinase/PI3K and mitogen-activated protein kinase/MAPK pathways. Functions as a T-cell growth factor and can increase NK-cell cytolytic activity as well. Promotes strong proliferation of activated B-cells and subsequently immunoglobulin production. Plays a pivotal role in regulating the adaptive immune system by controlling the survival and proliferation of regulatory T-cells, which are required for the maintenance of immune tolerance. Moreover, participates in the differentiation and homeostasis of effector T-cell subsets, including Th1, Th2, Th17 as well as memory CD8-positive T-cells. The chain is Interleukin-2 (Il2) from Rattus norvegicus (Rat).